A 422-amino-acid polypeptide reads, in one-letter code: Testin (422 aa).

The 108-residue stretch at Met-92–Glu-199 folds into the PET domain. The interval Gln-135–His-165 is disordered. A compositionally biased stretch (basic and acidic residues) spans Pro-155–His-165. LIM zinc-binding domains follow at residues Tyr-234–Pro-299, Arg-300–Val-359, and Ser-360–Ser-422.

This sequence belongs to the prickle / espinas / testin family. Expressed in the animal hemisphere at the 4-cell stage. By stage 18, expressed in cells adjacent to the anterior neural plate. In late neurula, expressed in the cranial neural crest. At tail bud stages, expressed strongly in the head, ventral to the developing eye, branchial arches and lateral line placodes. Also localized in the otic vesicle, dorsal fin and notochord with weaker expression at intersomitic junctions of tail bud embryos.

It localises to the cytoplasm. The protein localises to the cell cortex. It is found in the cell junction. Its subcellular location is the focal adhesion. Scaffold protein that may play a role in cell adhesion, cell spreading and in the reorganization of the actin cytoskeleton. May inhibit cell growth. Regulates cranial neural crest migration. Acts together with prickle1 to control axial elongation. In Xenopus laevis (African clawed frog), this protein is Testin.